A 506-amino-acid chain; its full sequence is Alpha-L-arabinofuranosidase B (506 aa).

Positions 1 to 26 (MSSGLSLERACAVALGIVASASLVAA) are cleaved as a signal peptide. The catalytic stretch occupies residues 27 to 343 (GPCDIYSSGG…ADIVAAKYAI (317 aa)). Disulfide bonds link Cys29-Cys39, Cys89-Cys94, and Cys184-Cys185. Residue Asn91 is glycosylated (N-linked (GlcNAc...) asparagine). Residue Asp227 coordinates substrate. Catalysis depends on Glu229, which acts as the Nucleophile. Substrate is bound by residues Asn230 and Gly304. The active-site Proton donor is Asp305. The interval 344–506 (ASLTSGPALT…VSWVVSTGFA (163 aa)) is ABD. Cysteines 409 and 447 form a disulfide. Residues His424, Asn426, Phe427, Asp443, His471, Glu473, Leu476, and Asp496 each coordinate substrate.

The protein belongs to the glycosyl hydrolase 54 family.

It localises to the secreted. It carries out the reaction Hydrolysis of terminal non-reducing alpha-L-arabinofuranoside residues in alpha-L-arabinosides.. It functions in the pathway glycan metabolism; L-arabinan degradation. Alpha-L-arabinofuranosidase involved in the degradation of arabinoxylan, a major component of plant hemicellulose. Able to hydrolyze 1,5-, 1,3- and 1,2-alpha-linkages not only in L-arabinofuranosyl oligosaccharides, but also in polysaccharides containing terminal non-reducing L-arabinofuranoses in side chains, like L-arabinan, arabinogalactan and arabinoxylan. The chain is Alpha-L-arabinofuranosidase B (abfB) from Aspergillus oryzae (strain ATCC 42149 / RIB 40) (Yellow koji mold).